Consider the following 93-residue polypeptide: Small ribosomal subunit protein uS17 (93 aa).

The protein belongs to the universal ribosomal protein uS17 family. In terms of assembly, part of the 30S ribosomal subunit.

One of the primary rRNA binding proteins, it binds specifically to the 5'-end of 16S ribosomal RNA. The sequence is that of Small ribosomal subunit protein uS17 from Rhodococcus erythropolis (strain PR4 / NBRC 100887).